The following is a 167-amino-acid chain: Small ribosomal subunit protein uS5 (167 aa).

The region spanning 11–74 (LQEKLIAVNR…EKARRNMINV (64 aa)) is the S5 DRBM domain.

It belongs to the universal ribosomal protein uS5 family. In terms of assembly, part of the 30S ribosomal subunit. Contacts proteins S4 and S8.

In terms of biological role, with S4 and S12 plays an important role in translational accuracy. Located at the back of the 30S subunit body where it stabilizes the conformation of the head with respect to the body. This is Small ribosomal subunit protein uS5 from Shigella dysenteriae serotype 1 (strain Sd197).